We begin with the raw amino-acid sequence, 464 residues long: UDP-N-acetylmuramate--L-alanine ligase (464 aa).

Residue 117–123 (GTHGKTT) participates in ATP binding.

This sequence belongs to the MurCDEF family.

The protein resides in the cytoplasm. The enzyme catalyses UDP-N-acetyl-alpha-D-muramate + L-alanine + ATP = UDP-N-acetyl-alpha-D-muramoyl-L-alanine + ADP + phosphate + H(+). It functions in the pathway cell wall biogenesis; peptidoglycan biosynthesis. Cell wall formation. This Streptomyces avermitilis (strain ATCC 31267 / DSM 46492 / JCM 5070 / NBRC 14893 / NCIMB 12804 / NRRL 8165 / MA-4680) protein is UDP-N-acetylmuramate--L-alanine ligase.